Here is a 257-residue protein sequence, read N- to C-terminus: Zinc transporter ZupT (257 aa).

A run of 8 helical transmembrane segments spans residues 5–25 (LILTLLAGAATFIGAFLGVLG), 32–52 (VLAFSLGFAAGIMLLISLMEM), 61–81 (GMSPVLGYGMFIIGLLGYFGL), 109–129 (AILLTLGISLHNFPEGIATFV), 137–157 (LGFGIALAVALHNIPEGLAVA), 171–191 (IFWAGISGMAEILGGVLAWLI), 195–215 (LVSPIVMAAIMAAVAGIMVAL), and 236–256 (GVLCGMSIMGLSLVILQTIGI). Residues Asn120 and Glu123 each coordinate Fe(2+). Glu123 and His148 together coordinate Zn(2+). Fe(2+)-binding residues include Asn149, Glu152, and Glu181. Glu152 provides a ligand contact to Zn(2+).

Belongs to the ZIP transporter (TC 2.A.5) family. ZupT subfamily.

It localises to the cell inner membrane. It catalyses the reaction Zn(2+)(in) = Zn(2+)(out). Mediates zinc uptake. May also transport other divalent cations. This chain is Zinc transporter ZupT, found in Salmonella heidelberg (strain SL476).